A 363-amino-acid chain; its full sequence is Spermatogenesis-associated protein 22 (363 aa).

Composition is skewed to polar residues over residues Met1 to Ser12, Gln30 to Asp48, Ile98 to Gly108, and Asn140 to Gln157. Disordered stretches follow at residues Met1–Asp51, Ile98–Asp127, and Asn140–Lys170.

As to quaternary structure, component of a multiprotein complex with MEIOB and RPA2. Interacts with MEIOB. Interacts with the complex BRME1:HSF2BP:BRCA2. In terms of tissue distribution, highly expressed in adult testis.

It localises to the chromosome. In terms of biological role, meiosis-specific protein required for homologous recombination in meiosis I. The polypeptide is Spermatogenesis-associated protein 22 (Homo sapiens (Human)).